Here is a 643-residue protein sequence, read N- to C-terminus: Extracellular metalloproteinase 4 (643 aa).

The first 18 residues, 1–18 (MHGLMLAGLLALPLSVLG), serve as a signal peptide directing secretion. A propeptide spanning residues 19 to 254 (HPTESHSSGI…VHSVVDYVSA (236 aa)) is cleaved from the precursor. Positions 47–57 (TKSDAVPKQDG) are enriched in basic and acidic residues. Positions 47–73 (TKSDAVPKQDGESFTTSSTGNDNSSSG) are disordered. The span at 61–73 (TTSSTGNDNSSSG) shows a compositional bias: low complexity. N-linked (GlcNAc...) asparagine glycosylation is found at N271 and N420. A Zn(2+)-binding site is contributed by H437. E438 is a catalytic residue. Residue H441 coordinates Zn(2+). Residues N603 and N629 are each glycosylated (N-linked (GlcNAc...) asparagine).

It belongs to the peptidase M36 family. Zn(2+) serves as cofactor.

The protein localises to the secreted. Its function is as follows. Secreted metalloproteinase probably acting as a virulence factor. The chain is Extracellular metalloproteinase 4 (MEP4) from Trichophyton rubrum (Athlete's foot fungus).